Reading from the N-terminus, the 175-residue chain is Large ribosomal subunit protein uL22 (175 aa).

Positions Val113–Asp175 are disordered. Residues Lys136–Lys154 are compositionally biased toward low complexity. Positions Glu166–Asp175 are enriched in basic and acidic residues.

The protein belongs to the universal ribosomal protein uL22 family. In terms of assembly, part of the 50S ribosomal subunit.

Its function is as follows. This protein binds specifically to 23S rRNA; its binding is stimulated by other ribosomal proteins, e.g. L4, L17, and L20. It is important during the early stages of 50S assembly. It makes multiple contacts with different domains of the 23S rRNA in the assembled 50S subunit and ribosome. Functionally, the globular domain of the protein is located near the polypeptide exit tunnel on the outside of the subunit, while an extended beta-hairpin is found that lines the wall of the exit tunnel in the center of the 70S ribosome. This Mycobacterium leprae (strain TN) protein is Large ribosomal subunit protein uL22.